Here is a 37-residue protein sequence, read N- to C-terminus: Large ribosomal subunit protein bL36c (37 aa).

It belongs to the bacterial ribosomal protein bL36 family.

It is found in the plastid. This is Large ribosomal subunit protein bL36c (rpl36) from Epifagus virginiana (Beechdrops).